We begin with the raw amino-acid sequence, 937 residues long: Translation initiation factor IF-2 (937 aa).

Disordered stretches follow at residues 61 to 156 (IQAN…KAKQ) and 171 to 274 (LTQS…SHKI). The span at 179–196 (AKKEISEVKKQEQEIKRH) shows a compositional bias: basic and acidic residues. The segment covering 197-208 (ENIKRRTGFRVI) has biased composition (basic residues). The segment covering 237 to 252 (EDIKKEWQEKDKQEAK) has biased composition (basic and acidic residues). Positions 436 to 605 (ERPPVVTIMG…LIQADIMELK (170 aa)) constitute a tr-type G domain. The interval 445–452 (GHVDHGKT) is G1. GTP is bound at residue 445 to 452 (GHVDHGKT). The G2 stretch occupies residues 470–474 (GITQH). Positions 491 to 494 (DTPG) are G3. GTP is bound by residues 491–495 (DTPGH) and 545–548 (NKMD). Residues 545–548 (NKMD) form a G4 region. The interval 581-583 (SAK) is G5.

This sequence belongs to the TRAFAC class translation factor GTPase superfamily. Classic translation factor GTPase family. IF-2 subfamily.

The protein localises to the cytoplasm. In terms of biological role, one of the essential components for the initiation of protein synthesis. Protects formylmethionyl-tRNA from spontaneous hydrolysis and promotes its binding to the 30S ribosomal subunits. Also involved in the hydrolysis of GTP during the formation of the 70S ribosomal complex. The protein is Translation initiation factor IF-2 of Helicobacter pylori (strain G27).